Consider the following 192-residue polypeptide: Thymidine kinase (192 aa).

Residues 9-16 and 85-88 each bind ATP; these read GAMNSGKS and DEVQ. Catalysis depends on Glu-86, which acts as the Proton acceptor. Zn(2+) contacts are provided by Cys-143, Cys-146, Cys-181, and Cys-184.

Belongs to the thymidine kinase family. In terms of assembly, homotetramer.

Its subcellular location is the cytoplasm. It catalyses the reaction thymidine + ATP = dTMP + ADP + H(+). This Shouchella clausii (strain KSM-K16) (Alkalihalobacillus clausii) protein is Thymidine kinase.